The following is a 206-amino-acid chain: MELKLLNENGQEGAVVNASDVVFGRDYNEALIHQVVVAYQANARQGNRAQKDREQVKHTTKKPWRQKGTGRARAGMSSSPLWRGGGRIFPNSPEENFSHKVNKKMHRAGLCSIFSQLAREGRLSVVEDIILEAPKTKLLAEKFKTMGLDSVLIITDTVDENLYLASRNLPHVAIVEPRYADPLSLIYFKKVLVTKAAVAQIEELLS.

A disordered region spans residues 46 to 78 (GNRAQKDREQVKHTTKKPWRQKGTGRARAGMSS). A compositionally biased stretch (basic residues) spans 58-70 (HTTKKPWRQKGTG).

This sequence belongs to the universal ribosomal protein uL4 family. As to quaternary structure, part of the 50S ribosomal subunit.

In terms of biological role, one of the primary rRNA binding proteins, this protein initially binds near the 5'-end of the 23S rRNA. It is important during the early stages of 50S assembly. It makes multiple contacts with different domains of the 23S rRNA in the assembled 50S subunit and ribosome. Its function is as follows. Forms part of the polypeptide exit tunnel. This Burkholderia lata (strain ATCC 17760 / DSM 23089 / LMG 22485 / NCIMB 9086 / R18194 / 383) protein is Large ribosomal subunit protein uL4.